The sequence spans 834 residues: Protein kintoun (834 aa).

Disordered stretches follow at residues 214–239, 374–415, 547–669, and 759–834; these read TAEEQEPHPLAHMFPTKPPAPGKQEP, SRED…SVAP, KGKV…STGR, and KKNQ…EMDD. Ser-378 is modified (phosphoserine). The segment covering 389–398 has biased composition (acidic residues); that stretch reads PVEEDPDGEL. Residues 552 to 571 are compositionally biased toward basic and acidic residues; the sequence is AKKDNAPLDVKFERNQEGHA. Residues 582–596 show a composition bias toward acidic residues; it reads EEEEDKENQDQEPES. Residues 597-607 show a composition bias toward low complexity; the sequence is DQQQQQQVQNK. Composition is skewed to basic residues over residues 608 to 619 and 759 to 773; these read KPGKKQRKKNKK and KKNQKRRDLKLRAQQ. Residue Ser-777 is modified to Phosphoserine. A compositionally biased stretch (basic and acidic residues) spans 785 to 798; it reads EETRGSALKQEENP.

This sequence belongs to the PIH1 family. Kintoun subfamily. In terms of assembly, interacts with Pp1alpha-96A, Pp1-87B, Pp1-13C and flw.

It localises to the cytoplasm. In terms of biological role, required for cytoplasmic pre-assembly of axonemal dyneins, thereby playing a central role in motility in cilia and flagella. Involved in pre-assembly of dynein arm complexes in the cytoplasm before intraflagellar transport loads them for the ciliary compartment. The polypeptide is Protein kintoun (Drosophila melanogaster (Fruit fly)).